Here is a 1080-residue protein sequence, read N- to C-terminus: Headcase protein (1080 aa).

Disordered regions lie at residues 1–27, 181–277, 310–335, 655–693, 798–826, 891–916, and 940–974; these read MAPR…LQQQ, IYLN…GNNG, SLSS…ISVS, PLES…QPPK, SKYQ…QHAT, SGCS…DGSK, and QRQQ…NGWS. The span at 181–197 shows a compositional bias: polar residues; that stretch reads IYLNGSGNRPTLANGSL. A compositionally biased stretch (gly residues) spans 218–228; that stretch reads NGGGGGGGAGV. A compositionally biased stretch (polar residues) spans 232-251; sequence TKTPLSNNNGNSYAGLTPNP. The segment covering 263–277 has biased composition (low complexity); that stretch reads NNGNTASNGSSGNNG. Residues 663 to 688 are compositionally biased toward polar residues; the sequence is GATTTQVPNAQGSPTASGCSSNTIAS. The segment covering 801–826 has biased composition (low complexity); the sequence is QQQQHQQQQQQRQQQHNLQPQQQHAT. The span at 900–913 shows a compositional bias: polar residues; sequence QPSLSPTASSNGND. The span at 941–974 shows a compositional bias: low complexity; that stretch reads RQQPPQQQVPQQQPHAASPTASLTSSSSSSNGWS.

In terms of tissue distribution, expressed in all imaginal cells of the embryo and larvae. Expressed in a subset of tracheal fusion cells from stage 14 to the end of embryogenesis in metameres 2-9, lateral trunk and ventral anastomoses.

The protein localises to the cytoplasm. Required for imaginal cell differentiation, may be involved in hormonal responsiveness during metamorphosis. Involved in an inhibitory signaling mechanism to determine the number of cells that will form unicellular sprouts in the trachea. Regulated by transcription factor esg. The longer hdc protein is completely functional and the shorter protein carries some function. The sequence is that of Headcase protein from Drosophila melanogaster (Fruit fly).